The chain runs to 475 residues: Trifunctional enzyme subunit beta, mitochondrial (475 aa).

Residues 1–34 (MISLLTYTLKNLPNTSKWALRFCMRPLSSSSQLQ) constitute a mitochondrion transit peptide. At Lys-73 the chain carries N6-acetyllysine; alternate. Lys-73 bears the N6-succinyllysine; alternate mark. Residue Cys-139 is the Acyl-thioester intermediate of the active site. An intramembrane segment occupies 174 to 221 (IRHSRKMRKMMLDLNKAKTLAQRLSIISKFRLNFLSPELPAVSEFSTS). The residue at position 189 (Lys-189) is an N6-acetyllysine; alternate. The residue at position 189 (Lys-189) is an N6-succinyllysine; alternate. N6-succinyllysine is present on residues Lys-191 and Lys-292. Lys-294 carries the post-translational modification N6-acetyllysine; alternate. At Lys-294 the chain carries N6-succinyllysine; alternate. Position 299 is an N6-acetyllysine (Lys-299). At Lys-333 the chain carries N6-acetyllysine; alternate. Lys-333 carries the N6-succinyllysine; alternate modification. 2 positions are modified to N6-acetyllysine: Lys-349 and Lys-362. Residue Cys-459 is the Proton donor/acceptor of the active site.

Belongs to the thiolase-like superfamily. Thiolase family. As to quaternary structure, heterotetramer of 2 alpha/HADHA and 2 beta/HADHB subunits; forms the mitochondrial trifunctional enzyme. Also purified as higher order heterooligomers including a 4 alpha/HADHA and 4 beta/HADHB heterooligomer which physiological significance remains unclear. The mitochondrial trifunctional enzyme interacts with MTLN. Interacts with RSAD2/viperin.

Its subcellular location is the mitochondrion. It localises to the mitochondrion inner membrane. The protein localises to the mitochondrion outer membrane. The protein resides in the endoplasmic reticulum. The catalysed reaction is an acyl-CoA + acetyl-CoA = a 3-oxoacyl-CoA + CoA. It catalyses the reaction butanoyl-CoA + acetyl-CoA = 3-oxohexanoyl-CoA + CoA. It carries out the reaction hexanoyl-CoA + acetyl-CoA = 3-oxooctanoyl-CoA + CoA. The enzyme catalyses octanoyl-CoA + acetyl-CoA = 3-oxodecanoyl-CoA + CoA. The catalysed reaction is decanoyl-CoA + acetyl-CoA = 3-oxododecanoyl-CoA + CoA. It catalyses the reaction dodecanoyl-CoA + acetyl-CoA = 3-oxotetradecanoyl-CoA + CoA. It carries out the reaction tetradecanoyl-CoA + acetyl-CoA = 3-oxohexadecanoyl-CoA + CoA. It functions in the pathway lipid metabolism; fatty acid beta-oxidation. Its function is as follows. Mitochondrial trifunctional enzyme catalyzes the last three of the four reactions of the mitochondrial beta-oxidation pathway. The mitochondrial beta-oxidation pathway is the major energy-producing process in tissues and is performed through four consecutive reactions breaking down fatty acids into acetyl-CoA. Among the enzymes involved in this pathway, the trifunctional enzyme exhibits specificity for long-chain fatty acids. Mitochondrial trifunctional enzyme is a heterotetrameric complex composed of two proteins, the trifunctional enzyme subunit alpha/HADHA carries the 2,3-enoyl-CoA hydratase and the 3-hydroxyacyl-CoA dehydrogenase activities, while the trifunctional enzyme subunit beta/HADHB described here bears the 3-ketoacyl-CoA thiolase activity. In Bos taurus (Bovine), this protein is Trifunctional enzyme subunit beta, mitochondrial (HADHB).